Consider the following 782-residue polypeptide: Shutoff protein (782 aa).

Residues 262 to 329 (VMNQLLIKRA…AVLVTVELEC (68 aa)) are binding to host EIF4G. The RRM domain occupies 332-450 (RFFSDITTLR…SLWTGFDERT (119 aa)). 2 positions are modified to phosphotyrosine; by host: Tyr349 and Tyr665. Residues 715 to 760 (GGRILGESGRGRGRGLGRMGGGGGGQPRRGSRGGGGRFQGRSDRRQ) form a disordered region. Residues 728–752 (RGLGRMGGGGGGQPRRGSRGGGGRF) show a composition bias toward gly residues.

The protein belongs to the adenoviridae shutoff protein family. Monomer. Interacts with hexon protein; this interaction allows chaperoning and trimerization of hexon proteins. Interacts (via N-terminus) with host initiation factor EIF4G (via C-terminus). Interacts (via RRM domain) with viral mRNAs that contain the tripartite leader; this interaction allows ribosome shunting and expression of viral late mRNAs. Post-translationally, might be cleaved by the viral protease. Phosphorylated. Tyrosine phosphorylation enhances preferential binding to tripartite leader mRNAs and allows ribosome shunting. In terms of processing, methylated. Asymmetric dimethylation by host PRMT1 of the Arg/Gly-rich region may regulate shutoff protein binding to hexon and promote the capsid assembly in the nucleus.

It localises to the host cytoplasm. Protein that inhibits host translation while promoting late viral translation by ribosome shunting. Blocks host cap-dependent translation by binding to eIF4G, displacing MKNK1 from cap initiation complexes and preventing EIF4E phosphorylation. Binds to the tripartite leader sequence of viral late mRNAs and recruits host eIF4G, PABPC1/poly-A binding protein and 40S ribosomes subunits on viral mRNAs, allowing ribosome shunting and efficient translation of late viral mRNAs even though conventional translation via ribosome scanning from the cap has been shut off in the host cell. During assembly, acts as a chaperone protein that helps hexon proteins assembly into trimers. The chain is Shutoff protein from Human adenovirus A serotype 12 (HAdV-12).